The chain runs to 86 residues: Small ribosomal subunit protein bS16 (86 aa).

This sequence belongs to the bacterial ribosomal protein bS16 family.

This chain is Small ribosomal subunit protein bS16, found in Mycoplasmoides gallisepticum (strain R(low / passage 15 / clone 2)) (Mycoplasma gallisepticum).